A 442-amino-acid chain; its full sequence is 3-phosphoshikimate 1-carboxyvinyltransferase (442 aa).

The 3-phosphoshikimate site is built by Lys23, Ser24, and Arg28. Phosphoenolpyruvate is bound at residue Lys23. 2 residues coordinate phosphoenolpyruvate: Gly95 and Arg123. 3-phosphoshikimate is bound by residues Ser167, Gln169, Asp315, and Lys342. Gln169 is a binding site for phosphoenolpyruvate. Asp315 acts as the Proton acceptor in catalysis. Phosphoenolpyruvate-binding residues include Arg346 and Arg390.

This sequence belongs to the EPSP synthase family. Monomer.

Its subcellular location is the cytoplasm. The enzyme catalyses 3-phosphoshikimate + phosphoenolpyruvate = 5-O-(1-carboxyvinyl)-3-phosphoshikimate + phosphate. It participates in metabolic intermediate biosynthesis; chorismate biosynthesis; chorismate from D-erythrose 4-phosphate and phosphoenolpyruvate: step 6/7. In terms of biological role, catalyzes the transfer of the enolpyruvyl moiety of phosphoenolpyruvate (PEP) to the 5-hydroxyl of shikimate-3-phosphate (S3P) to produce enolpyruvyl shikimate-3-phosphate and inorganic phosphate. This Dichelobacter nodosus (strain VCS1703A) protein is 3-phosphoshikimate 1-carboxyvinyltransferase.